Here is a 547-residue protein sequence, read N- to C-terminus: Solute carrier family 22 member 7 (547 aa).

The helical transmembrane segment at Val21–Leu41 threads the bilayer. The segment covering Asn91–Glu103 has biased composition (polar residues). Residues Asn91–Val112 form a disordered region. 11 helical membrane-spanning segments follow: residues Ala145 to Ser165, Val179 to Ile199, Leu203 to Leu223, Val233 to Ile253, Trp258 to Pro278, Ile345 to Leu365, Leu367 to Pro387, Leu403 to Ser423, Thr431 to Phe451, Met465 to Leu485, and Leu492 to Pro512. The tract at residues Glu521–Asp547 is disordered.

This sequence belongs to the major facilitator (TC 2.A.1) superfamily. Organic cation transporter (TC 2.A.1.19) family.

The protein resides in the basolateral cell membrane. It is found in the apical cell membrane. The protein localises to the cell membrane. It carries out the reaction orotate(out) + L-glutamate(in) = orotate(in) + L-glutamate(out). It catalyses the reaction 3',5'-cyclic GMP(in) = 3',5'-cyclic GMP(out). The catalysed reaction is GMP(in) = GMP(out). The enzyme catalyses 2'-deoxyguanosine(in) = 2'-deoxyguanosine(out). It carries out the reaction GDP(in) = GDP(out). It catalyses the reaction guanosine(in) = guanosine(out). The catalysed reaction is GTP(in) = GTP(out). The enzyme catalyses 3',5'-cyclic AMP(in) = 3',5'-cyclic AMP(out). It carries out the reaction creatinine(in) = creatinine(out). It catalyses the reaction prostaglandin E2(out) = prostaglandin E2(in). The catalysed reaction is 2-oxoglutarate(in) = 2-oxoglutarate(out). The enzyme catalyses glutarate(in) = glutarate(out). It carries out the reaction urate(out) = urate(in). It catalyses the reaction estrone 3-sulfate(out) = estrone 3-sulfate(in). Its function is as follows. Functions as a Na(+)-independent bidirectional multispecific transporter. Contributes to the renal and hepatic elimination of endogenous organic compounds from the systemic circulation into the urine and bile, respectively. Capable of transporting a wide range of purine and pyrimidine nucleobases, nucleosides and nucleotides, with cGMP, 2'deoxyguanosine and GMP being the preferred substrates. Functions as a pH- and chloride-independent cGMP bidirectional facilitative transporter that can regulate both intracellular and extracellular levels of cGMP and may be involved in cGMP signaling pathways. Mediates orotate/glutamate bidirectional exchange and most likely display a physiological role in hepatic release of glutamate into the blood. Involved in renal secretion and possible reabsorption of creatinine. Able to uptake prostaglandin E2 (PGE2) and may contribute to PGE2 renal excretion. Also transports alpha-ketoglutarate and urate. Apart from the orotate/glutamate exchange, the counterions for the uptake of other SLC22A7/OAT2 substrates remain to be identified. This Bos taurus (Bovine) protein is Solute carrier family 22 member 7 (SLC22A7).